We begin with the raw amino-acid sequence, 256 residues long: tRNA (guanine-N(7)-)-methyltransferase (256 aa).

The segment at 1-43 (MDVDPVNSEMELDNKPTCETVPGLPQKKHYRQRAHSNPHSDHD) is disordered. The segment covering 26–36 (QKKHYRQRAHS) has biased composition (basic residues). Residues glycine 74, 97–98 (EI), 132–133 (NA), and leucine 152 contribute to the S-adenosyl-L-methionine site. Aspartate 155 is a catalytic residue. S-adenosyl-L-methionine is bound at residue 230–232 (TEE).

It belongs to the class I-like SAM-binding methyltransferase superfamily. TrmB family.

Its subcellular location is the nucleus. The enzyme catalyses guanosine(46) in tRNA + S-adenosyl-L-methionine = N(7)-methylguanosine(46) in tRNA + S-adenosyl-L-homocysteine. It participates in tRNA modification; N(7)-methylguanine-tRNA biosynthesis. Catalyzes the formation of N(7)-methylguanine at position 46 (m7G46) in tRNA. This chain is tRNA (guanine-N(7)-)-methyltransferase, found in Caenorhabditis briggsae.